A 280-amino-acid chain; its full sequence is Ribonuclease Z (280 aa).

The Zn(2+) site is built by histidine 61, histidine 63, aspartate 65, histidine 66, histidine 153, aspartate 176, and histidine 240. Aspartate 65 (proton acceptor) is an active-site residue.

Belongs to the RNase Z family. As to quaternary structure, homodimer. It depends on Zn(2+) as a cofactor.

The catalysed reaction is Endonucleolytic cleavage of RNA, removing extra 3' nucleotides from tRNA precursor, generating 3' termini of tRNAs. A 3'-hydroxy group is left at the tRNA terminus and a 5'-phosphoryl group is left at the trailer molecule.. In terms of biological role, zinc phosphodiesterase, which displays some tRNA 3'-processing endonuclease activity. Probably involved in tRNA maturation, by removing a 3'-trailer from precursor tRNA. The protein is Ribonuclease Z of Mycolicibacterium paratuberculosis (strain ATCC BAA-968 / K-10) (Mycobacterium paratuberculosis).